Consider the following 316-residue polypeptide: Ribosomal RNA small subunit methyltransferase H (316 aa).

Residues 35–37, Asp-55, Phe-84, Asp-105, and Gln-112 contribute to the S-adenosyl-L-methionine site; that span reads SGH.

Belongs to the methyltransferase superfamily. RsmH family.

The protein resides in the cytoplasm. The enzyme catalyses cytidine(1402) in 16S rRNA + S-adenosyl-L-methionine = N(4)-methylcytidine(1402) in 16S rRNA + S-adenosyl-L-homocysteine + H(+). Functionally, specifically methylates the N4 position of cytidine in position 1402 (C1402) of 16S rRNA. The sequence is that of Ribosomal RNA small subunit methyltransferase H from Streptococcus pyogenes serotype M18 (strain MGAS8232).